A 144-amino-acid chain; its full sequence is Large ribosomal subunit protein uL13 (144 aa).

It belongs to the universal ribosomal protein uL13 family. In terms of assembly, part of the 50S ribosomal subunit.

Functionally, this protein is one of the early assembly proteins of the 50S ribosomal subunit, although it is not seen to bind rRNA by itself. It is important during the early stages of 50S assembly. The chain is Large ribosomal subunit protein uL13 from Blochmanniella pennsylvanica (strain BPEN).